The primary structure comprises 31 residues: Kappa-theraphotoxin-Ps1b (31 aa).

3 disulfides stabilise this stretch: Cys2–Cys16, Cys9–Cys21, and Cys15–Cys25. At Met31 the chain carries Methionine amide.

The protein belongs to the neurotoxin 30 (phrixotoxin) family. In terms of tissue distribution, expressed by the venom gland.

The protein localises to the secreted. Its function is as follows. Potent and specific blocker of Kv4.2/KCND2 (IC(50)=34 nM) and Kv4.3/KCND3 (IC(50)=71 nM) potassium channels. Acts by altering the gating properties of these channels. This is Kappa-theraphotoxin-Ps1b from Paraphysa scrofa (Chilean copper tarantula).